We begin with the raw amino-acid sequence, 507 residues long: Interleukin-17 receptor E-like protein (507 aa).

Positions 1-21 (MLAGQALAFLGLTWGTFQSLA) are cleaved as a signal peptide.

Its subcellular location is the secreted. The polypeptide is Interleukin-17 receptor E-like protein (Homo sapiens (Human)).